Reading from the N-terminus, the 141-residue chain is UPF0225 protein Rmet_0111 (141 aa).

The protein belongs to the UPF0225 family.

This Cupriavidus metallidurans (strain ATCC 43123 / DSM 2839 / NBRC 102507 / CH34) (Ralstonia metallidurans) protein is UPF0225 protein Rmet_0111.